The following is a 219-amino-acid chain: UPF0173 metal-dependent hydrolase Mhun_1705 (219 aa).

The protein belongs to the UPF0173 family.

The chain is UPF0173 metal-dependent hydrolase Mhun_1705 from Methanospirillum hungatei JF-1 (strain ATCC 27890 / DSM 864 / NBRC 100397 / JF-1).